The chain runs to 552 residues: Non-structural protein NS1 (552 aa).

This sequence belongs to the orbivirus non-structural protein NS1 family.

This chain is Non-structural protein NS1 (Segment-5), found in Epizootic hemorrhagic disease virus 2 (strain Alberta) (EHDV-2).